The sequence spans 317 residues: Probable transcription factor At5g61620 (317 aa).

A CCHC-type zinc finger spans residues 12–25 (CSHCGHNGHNARTC). Residues 77–111 (DPIAAVDDTGYHSDGQIHSKKGKTAHEKKKGKPWT) are disordered. Positions 94-108 (HSKKGKTAHEKKKGK) are enriched in basic residues. The HTH myb-type domain maps to 102–158 (HEKKKGKPWTEEEHRNFLIGLNKLGKGDWRGIAKSFVSTRTPTQVASHAQKYFIRLN). The segment at residues 130–154 (WRGIAKSFVSTRTPTQVASHAQKYF) is a DNA-binding region (H-T-H motif). The interval 173-206 (SLEDQKEKERNSQDASTKTPPKQPITGIQQPVVQ) is disordered. Basic and acidic residues predominate over residues 175-184 (EDQKEKERNS). The segment covering 185-206 (QDASTKTPPKQPITGIQQPVVQ) has biased composition (polar residues).

The protein localises to the nucleus. Its function is as follows. Probable transcription factor involved in somatic embryogenesis. Acts as a positive regulator of BHLH109. The chain is Probable transcription factor At5g61620 from Arabidopsis thaliana (Mouse-ear cress).